The chain runs to 79 residues: Cytochrome b (79 aa).

Helical transmembrane passes span 1–7 (SALFLAM), 31–52 (WLIRYIHANGASLFFICLYLHI), and 67–79 (WNIGIILLILTMA). Heme b-binding residues include H37 and H51.

This sequence belongs to the cytochrome b family. In terms of assembly, the cytochrome bc1 complex contains 11 subunits: 3 respiratory subunits (MT-CYB, CYC1 and UQCRFS1), 2 core proteins (UQCRC1 and UQCRC2) and 6 low-molecular weight proteins (UQCRH/QCR6, UQCRB/QCR7, UQCRQ/QCR8, UQCR10/QCR9, UQCR11/QCR10 and a cleavage product of UQCRFS1). This cytochrome bc1 complex then forms a dimer. Heme b is required as a cofactor.

The protein resides in the mitochondrion inner membrane. Its function is as follows. Component of the ubiquinol-cytochrome c reductase complex (complex III or cytochrome b-c1 complex) that is part of the mitochondrial respiratory chain. The b-c1 complex mediates electron transfer from ubiquinol to cytochrome c. Contributes to the generation of a proton gradient across the mitochondrial membrane that is then used for ATP synthesis. The chain is Cytochrome b (MT-CYB) from Dipodomys heermanni (Heermann's kangaroo rat).